A 208-amino-acid polypeptide reads, in one-letter code: Probable transcriptional regulator ycf29 (208 aa).

One can recognise a Response regulatory domain in the interval 11-118 (KLILIEPEEH…ELIAIISNLI (108 aa)). At aspartate 60 the chain carries 4-aspartylphosphate. The region spanning 146–208 (TSFSYINLTV…NRIQILSYFN (63 aa)) is the HTH luxR-type domain.

It is found in the plastid. It localises to the chloroplast. This is Probable transcriptional regulator ycf29 (ycf29) from Guillardia theta (Cryptophyte).